The chain runs to 491 residues: MTDLTSLTLAEARKGLAAKTFTSLELTDAHLSAIEAARVLNAFVMETPDRARDMAREADGKIAKGDAGPLAGIPLGMTDLFATKGVRTTACSKILGNFVPTYESTVTSQLWRDGAVMLGKLNNDEFAMGSANETSCFGPVGNPWRREGSNTTLVPGGSSGGSASAVAALLCMGATATDTGGSIRQPAAFTATVGIKPTYGRCSRWGIVAFASSLDQAGPIARSVRDSAMLLRSMAGHDPKDTTSVDIPVPDYEAAIGKSVKGIRIGIPKEYRLDGMPAEIEKLWSEGAAWLKAAGAELVEVSLPHTKYALPAYYIVAPAEASSNLARYDGVRYGLREQGKNIIELYENTRAEGFGAEVRRRVMIGTYVLSAGYYDAYYLRAQKVRTLIKKDFEDCFAKGVNAILTPATPSAAFGIGEKGGADPVEMYLNDIFTVTVNMAGLPGIAVPAGKDAQGLPLGLQLIGRPFDEETLFSLGEVIEQAAGRFTPARWW.

S158 acts as the Charge relay system in catalysis. The Acyl-ester intermediate role is filled by S182.

It belongs to the amidase family. GatA subfamily. Heterotrimer of A, B and C subunits.

It catalyses the reaction L-glutamyl-tRNA(Gln) + L-glutamine + ATP + H2O = L-glutaminyl-tRNA(Gln) + L-glutamate + ADP + phosphate + H(+). Its function is as follows. Allows the formation of correctly charged Gln-tRNA(Gln) through the transamidation of misacylated Glu-tRNA(Gln) in organisms which lack glutaminyl-tRNA synthetase. The reaction takes place in the presence of glutamine and ATP through an activated gamma-phospho-Glu-tRNA(Gln). This is Glutamyl-tRNA(Gln) amidotransferase subunit A from Bradyrhizobium diazoefficiens (strain JCM 10833 / BCRC 13528 / IAM 13628 / NBRC 14792 / USDA 110).